The chain runs to 159 residues: MVHFMVCGILLGFLVFKISRHLESRRDDGEFAPSTNLVWDLRRDLGNLFYGPNSGPLVGPLEPLNDLNIFNNLKIVEDQESYTLNKKIIHLCTRDLRSKRYYDKNTLMFVVLHELAHVLCRDIGHTDNFSTINQALLDYAIARGYYDPRKPFVKNYCSL.

The protein belongs to the IIV-6 136R family.

This is an uncharacterized protein from Invertebrate iridescent virus 3 (IIV-3).